A 480-amino-acid chain; its full sequence is Glycogen synthase (480 aa).

Residue Lys15 coordinates ADP-alpha-D-glucose.

It belongs to the glycosyltransferase 1 family. Bacterial/plant glycogen synthase subfamily.

It carries out the reaction [(1-&gt;4)-alpha-D-glucosyl](n) + ADP-alpha-D-glucose = [(1-&gt;4)-alpha-D-glucosyl](n+1) + ADP + H(+). It functions in the pathway glycan biosynthesis; glycogen biosynthesis. Functionally, synthesizes alpha-1,4-glucan chains using ADP-glucose. This chain is Glycogen synthase, found in Opitutus terrae (strain DSM 11246 / JCM 15787 / PB90-1).